A 2647-amino-acid polypeptide reads, in one-letter code: Filamin-A (2647 aa).

Residues 1–37 form a disordered region; the sequence is MSSSHSRCGQSAAVASPGGSIDSRDAEMPATEKDLAE. The residue at position 2 (Ser-2) is an N-acetylserine. Residues 2–274 form an actin-binding region; the sequence is SSSHSRCGQS…PKAKLKPGAP (273 aa). A phosphoserine mark is found at Ser-11, Ser-16, and Ser-20. The segment covering 22 to 37 has biased composition (basic and acidic residues); that stretch reads DSRDAEMPATEKDLAE. Residues Lys-42, Lys-43, and Lys-135 each participate in a glycyl lysine isopeptide (Lys-Gly) (interchain with G-Cter in ubiquitin) cross-link. Calponin-homology (CH) domains are found at residues 43–149 and 166–269; these read KIQQ…LHYS and QTPK…KAKL. Residues 271–294 form a disordered region; the sequence is PGAPLRPKLNPKKARAYGPGIEPT. Filamin repeat units lie at residues 276–374, 376–474, 475–570, 571–663, 667–763, 764–866, 867–965, 966–1061, 1062–1154, 1155–1249, 1250–1349, 1350–1442, 1443–1539, 1540–1636, and 1641–1740; these read RPKL…EVYV, KSQG…TVTV, GQAC…EVKV, GTEC…MADI, PQDF…RVNV, GAGS…RVKV, EPSH…SVGV, SPSL…PLEA, VAPT…KAHV, APCF…KLQV, EPAV…QVPV, TEGC…KVPV, HDVT…KVKV, LPTH…RVRA, and DASK…QVTA. Lys-299 is covalently cross-linked (Glycyl lysine isopeptide (Lys-Gly) (interchain with G-Cter in SUMO1); alternate). Lys-299 is covalently cross-linked (Glycyl lysine isopeptide (Lys-Gly) (interchain with G-Cter in SUMO2); alternate). Lys-376 and Lys-508 each carry N6-acetyllysine. N6-acetyllysine occurs at positions 700, 781, 837, 865, and 906. A phosphoserine mark is found at Ser-968 and Ser-1055. N6-acetyllysine; alternate is present on Lys-1071. Residue Lys-1071 is modified to N6-succinyllysine; alternate. The residue at position 1084 (Ser-1084) is a Phosphoserine. Thr-1089 is subject to Phosphothreonine. Ser-1301 and Ser-1338 each carry phosphoserine. Lys-1372 carries the post-translational modification N6-acetyllysine. Phosphoserine is present on residues Ser-1459 and Ser-1533. The interval 1490–1607 is interaction with furin; sequence PKGLVEPVDV…DNHDGTYTVA (118 aa). An N6-acetyllysine modification is found at Lys-1538. A phosphoserine mark is found at Ser-1630 and Ser-1734. A hinge 1 region spans residues 1741–1778; the sequence is LAGDQPTVQTPLRSQQLAPQYNYPQGSQQTWIPERPMV. Thr-1750 is subject to Phosphothreonine. Filamin repeat units follow at residues 1765–1860, 1861–1952, 1953–2039, 2042–2134, 2135–2230, 2233–2325, 2327–2420, and 2424–2516; these read QGSQ…QFYV, DYVN…TARV, TGDD…PVVI, SEIG…SVKV, TGEG…QFTV, LGEG…VVPV, SPSG…KIRV, and GHGG…KAKV. The residue at position 1835 (Ser-1835) is a Phosphoserine. A phosphoserine mark is found at Ser-1967, Ser-2053, Ser-2128, Ser-2152, Ser-2158, Ser-2163, Ser-2180, Ser-2284, Ser-2327, and Ser-2329. Thr-2336 carries the phosphothreonine modification. A phosphoserine mark is found at Ser-2338, Ser-2370, Ser-2414, Ser-2510, Ser-2523, and Ser-2526. The tract at residues 2517–2553 is hinge 2; sequence TGPRLVSNHSLHETSSVFVDSLTKVATVPQHATSGPG. Residues 2517-2647 are self-association site, tail; sequence TGPRLVSNHS…PGSPYRIMVP (131 aa). The Filamin 24 repeat unit spans residues 2552–2646; the sequence is PGPADVSKVV…IPGSPYRIMV (95 aa). The residue at position 2569 (Lys-2569) is an N6-acetyllysine; alternate. Residue Lys-2569 is modified to N6-succinyllysine; alternate. Lys-2575 carries the post-translational modification N6-acetyllysine. Thr-2599 is modified (phosphothreonine). N6-acetyllysine occurs at positions 2607 and 2621.

This sequence belongs to the filamin family. In terms of assembly, homodimer. Interacts with FCGR1A, FLNB, FURIN, HSPB7, KCND2, INPPL1, MYOT, MYOZ1, PDLIM2, ARHGAP24, PSEN1, PSEN2 and ECSCR. Also interacts with various other binding partners in addition to filamentous actin. Interacts (via N-terminus) with TAF1B. Interacts (via N-terminus) with MIS18BP1 (via N-terminus). Interacts with TMEM67 (via C-terminus) and MKS1. Interacts (via actin-binding domain) with MICALL2 (via calponin-homology (CH) domain). Interacts with RFLNA and RFLNB. Interacts (via filamin repeat 5) with SYK; docks SYK to the plasma membrane. Interacts (via filamin repeats 19 and 21) with DRD3; increased PKA-mediated phosphorylation at Ser-2152. Interacts (via filamin repeat 21) with MAS1, AGTR1 and ADRA1D; increases PKA-mediated phosphorylation of FLNA at Ser-2152. Interacts (via filamin repeats 4, 9, 12, 17, 19, 21, and 23) with GP1BA (high affinity), ITGB7, ITGB2 and FBLIM1. Interacts with CEACAM1 (via cytoplasmic domain); inhibits cell migration and cell scattering by interfering with the interaction between FLNA and RALA. Interacts with FOXC1. Interacts (via calponin-homology (CH) domain 1 and filamin repeat 24) with CRMP1; the interaction alters FLNA ternary structure and thus promotes FLNA dissociation from F-actin. Interacts with DPYSL3/CRMP3 and DPYSL4/CRMP4. Post-translationally, phosphorylation at Ser-2152 is negatively regulated by the autoinhibited conformation of filamin repeats 19-21. Ligand binding induces a conformational switch triggering phosphorylation at Ser-2152 by PKA. Polyubiquitination in the CH1 domain by a SCF-like complex containing ASB2 leads to proteasomal degradation. Prior dissociation from actin may be required to expose the target lysines. Ubiquitinated in endothelial cells by RNF213 downstream of the non-canonical Wnt signaling pathway, leading to its degradation by the proteasome. In terms of tissue distribution, widely expressed. Highly expressed in Purkinje cells.

The protein resides in the cytoplasm. Its subcellular location is the cell cortex. The protein localises to the cytoskeleton. It is found in the perikaryon. It localises to the cell projection. The protein resides in the growth cone. Its subcellular location is the podosome. Functionally, actin binding protein that promotes orthogonal branching of actin filaments and links actin filaments to membrane glycoproteins. Anchors various transmembrane proteins to the actin cytoskeleton and serves as a scaffold for a wide range of cytoplasmic signaling proteins. Interaction with FLNB may allow neuroblast migration from the ventricular zone into the cortical plate. Tethers cell surface-localized furin, modulates its rate of internalization and directs its intracellular trafficking. Involved in ciliogenesis. Plays a role in cell-cell contacts and adherens junctions during the development of blood vessels, heart and brain organs. Plays a role in platelets morphology through interaction with SYK that regulates ITAM- and ITAM-like-containing receptor signaling, resulting in by platelet cytoskeleton organization maintenance. During the axon guidance process, required for growth cone collapse induced by SEMA3A-mediated stimulation of neurons. In Mus musculus (Mouse), this protein is Filamin-A (Flna).